The following is a 270-amino-acid chain: Diaminopimelate epimerase (270 aa).

Residues Asn-15, Gln-49, and Asn-66 each coordinate substrate. The active-site Proton donor is Cys-75. Residues 76 to 77 (GN), Asn-155, Asn-187, and 204 to 205 (ER) each bind substrate. Catalysis depends on Cys-213, which acts as the Proton acceptor. A substrate-binding site is contributed by 214–215 (GS).

The protein belongs to the diaminopimelate epimerase family. Homodimer.

It is found in the cytoplasm. The enzyme catalyses (2S,6S)-2,6-diaminopimelate = meso-2,6-diaminopimelate. It functions in the pathway amino-acid biosynthesis; L-lysine biosynthesis via DAP pathway; DL-2,6-diaminopimelate from LL-2,6-diaminopimelate: step 1/1. Functionally, catalyzes the stereoinversion of LL-2,6-diaminopimelate (L,L-DAP) to meso-diaminopimelate (meso-DAP), a precursor of L-lysine and an essential component of the bacterial peptidoglycan. In Rickettsia prowazekii (strain Madrid E), this protein is Diaminopimelate epimerase.